We begin with the raw amino-acid sequence, 418 residues long: RuvB-like helicase 2 (418 aa).

ATP is bound at residue 65-72 (GDRGSGKT).

This sequence belongs to the RuvB family. As to quaternary structure, component of the SWR1 chromatin remodeling complex, the INO80 chromatin remodeling complex, and of the R2TP complex.

It is found in the nucleus. The catalysed reaction is ATP + H2O = ADP + phosphate + H(+). In terms of biological role, DNA helicase which participates in several chromatin remodeling complexes, including the SWR1 and the INO80 complexes. The SWR1 complex mediates the ATP-dependent exchange of histone H2A for the H2A variant HZT1 leading to transcriptional regulation of selected genes by chromatin remodeling. The INO80 complex remodels chromatin by shifting nucleosomes and is involved in DNA repair. Also involved in pre-rRNA processing. The sequence is that of RuvB-like helicase 2 (RVB2) from Encephalitozoon cuniculi (strain GB-M1) (Microsporidian parasite).